Reading from the N-terminus, the 371-residue chain is Cathepsin L1 (371 aa).

Residues 1–48 form the signal peptide; that stretch reads MNHLGVFETRFRPRTRHKSQRAQLIPEQITMRTAVLLPLLALLAVAQA. Residues 49 to 153 constitute a propeptide, activation peptide; it reads VSFADVVMEE…VTFISPAHVT (105 aa). Asn127 carries N-linked (GlcNAc...) asparagine glycosylation. 3 disulfide bridges follow: Cys175–Cys218, Cys209–Cys251, and Cys310–Cys360. Cys178 is an active-site residue. Residue His317 is part of the active site. Positions 327 to 329 are excised as a propeptide; sequence DES. Asn338 is an active-site residue.

This sequence belongs to the peptidase C1 family. As to quaternary structure, dimer of a heavy and a light chain linked by disulfide bonds. As to expression, in the embryo, predominantly expressed in the midgut. Also expressed in larval alimentary organs such as salivary gland and midgut including gastric caeca.

Its subcellular location is the lysosome. The enzyme catalyses Specificity close to that of papain. As compared to cathepsin B, cathepsin L exhibits higher activity toward protein substrates, but has little activity on Z-Arg-Arg-NHMec, and no peptidyl-dipeptidase activity.. Its function is as follows. Important for the overall degradation of proteins in lysosomes. Essential for adult male and female fertility. May play a role in digestion. In Drosophila melanogaster (Fruit fly), this protein is Cathepsin L1.